The following is a 383-amino-acid chain: 8-amino-7-oxononanoate synthase (383 aa).

Residue Arg-21 participates in substrate binding. Pyridoxal 5'-phosphate is bound at residue 108–109; it reads GF. His-133 contributes to the substrate binding site. Residues Ser-179, His-207, and Thr-233 each coordinate pyridoxal 5'-phosphate. At Lys-236 the chain carries N6-(pyridoxal phosphate)lysine. Thr-350 lines the substrate pocket.

It belongs to the class-II pyridoxal-phosphate-dependent aminotransferase family. BioF subfamily. As to quaternary structure, homodimer. It depends on pyridoxal 5'-phosphate as a cofactor.

It carries out the reaction 6-carboxyhexanoyl-[ACP] + L-alanine + H(+) = (8S)-8-amino-7-oxononanoate + holo-[ACP] + CO2. It participates in cofactor biosynthesis; biotin biosynthesis. Its function is as follows. Catalyzes the decarboxylative condensation of pimeloyl-[acyl-carrier protein] and L-alanine to produce 8-amino-7-oxononanoate (AON), [acyl-carrier protein], and carbon dioxide. The sequence is that of 8-amino-7-oxononanoate synthase from Cronobacter sakazakii (strain ATCC BAA-894) (Enterobacter sakazakii).